A 261-amino-acid polypeptide reads, in one-letter code: Chitinase 8 (261 aa).

Positions 1–29 (MTTTTTRFVQLAACAAASLLAVAASGAAA) are cleaved as a signal peptide. 2 disulfide bridges follow: Cys-53-Cys-115 and Cys-221-Cys-253. The active-site Proton donor is Glu-98.

It belongs to the glycosyl hydrolase 19 family. Chitinase class II subfamily. As to expression, expressed in roots, leaves, sheaths and meristems.

The catalysed reaction is Random endo-hydrolysis of N-acetyl-beta-D-glucosaminide (1-&gt;4)-beta-linkages in chitin and chitodextrins.. In Oryza sativa subsp. japonica (Rice), this protein is Chitinase 8 (Cht8).